The following is a 667-amino-acid chain: DNA ligase (667 aa).

Residues aspartate 32 to aspartate 36, serine 81 to leucine 82, and glutamate 110 each bind NAD(+). Lysine 112 functions as the N6-AMP-lysine intermediate in the catalytic mechanism. Residues arginine 133, glutamate 167, lysine 283, and lysine 307 each coordinate NAD(+). Cysteine 401, cysteine 404, cysteine 419, and cysteine 424 together coordinate Zn(2+). The BRCT domain occupies glutamate 586–serine 667.

It belongs to the NAD-dependent DNA ligase family. LigA subfamily. It depends on Mg(2+) as a cofactor. The cofactor is Mn(2+).

It catalyses the reaction NAD(+) + (deoxyribonucleotide)n-3'-hydroxyl + 5'-phospho-(deoxyribonucleotide)m = (deoxyribonucleotide)n+m + AMP + beta-nicotinamide D-nucleotide.. In terms of biological role, DNA ligase that catalyzes the formation of phosphodiester linkages between 5'-phosphoryl and 3'-hydroxyl groups in double-stranded DNA using NAD as a coenzyme and as the energy source for the reaction. It is essential for DNA replication and repair of damaged DNA. The protein is DNA ligase of Staphylococcus aureus (strain Mu3 / ATCC 700698).